The following is a 707-amino-acid chain: Lipase maturation factor 2 (707 aa).

The next 10 helical transmembrane spans lie at 10–30, 78–98, 102–122, 126–146, 158–178, 220–240, 256–276, 309–329, 358–378, and 395–415; these read AFLW…YVQI, MELI…FSCL, LVFL…QVFL, WDSL…LHAM, GVTF…SGVV, FSVV…FLPF, ILII…VLCC, LVSL…VKYF, ITFP…LKGM, and LQWL…LVPY. A glycan (N-linked (GlcNAc...) asparagine) is linked at asparagine 483. Residues 634-654 traverse the membrane as a helical segment; the sequence is LLLHSFIFGIFTIYFLQAMFG. A disordered region spans residues 661–707; sequence VAKQRHSMPPNEKKKQKPNSGQGESASSKSSGHGTDTVRRNKKNEKS. Over residues 680-694 the composition is skewed to low complexity; the sequence is SGQGESASSKSSGHG. Positions 696–707 are enriched in basic and acidic residues; it reads DTVRRNKKNEKS.

The protein belongs to the lipase maturation factor family.

It is found in the endoplasmic reticulum membrane. Functionally, involved in the maturation of specific proteins in the endoplasmic reticulum. In Xenopus laevis (African clawed frog), this protein is Lipase maturation factor 2 (lmf2).